The primary structure comprises 210 residues: 3-demethoxyubiquinol 3-hydroxylase (210 aa).

Fe cation-binding residues include E59, E89, H92, E141, E173, and H176.

The protein belongs to the COQ7 family. Fe cation is required as a cofactor.

It localises to the cell membrane. The enzyme catalyses a 5-methoxy-2-methyl-3-(all-trans-polyprenyl)benzene-1,4-diol + AH2 + O2 = a 3-demethylubiquinol + A + H2O. It participates in cofactor biosynthesis; ubiquinone biosynthesis. Catalyzes the hydroxylation of 2-nonaprenyl-3-methyl-6-methoxy-1,4-benzoquinol during ubiquinone biosynthesis. In Marinomonas sp. (strain MWYL1), this protein is 3-demethoxyubiquinol 3-hydroxylase.